The chain runs to 255 residues: METVQSAHEYIEHHLTFLTAGDGWFGINLDSMIMVWLTGLVFILSFRYAVTKGTKGVPGRFQCLIEIIFEFVDDIVKEIFQAKDKLIGPLALTIFVWVLLMNAVDLLPIDLIPALTSAVGVEHFRDLPSADINITMSMALGVFILVLGYTFKNKGVKGFIKELTTQPFSHPLLYPVNLVLELVTLISKPISLGLRLFGNMYAGEMIFILIALMPWWMQWALSVPWALFHILIVVLQAFIFMVLTVVYLGMAVEEH.

Helical transmembrane passes span 24 to 44 (WFGI…VFIL), 86 to 106 (LIGP…AVDL), 131 to 151 (DINI…GYTF), 205 to 225 (MIFI…SVPW), and 226 to 246 (ALFH…LTVV).

The protein belongs to the ATPase A chain family. In terms of assembly, F-type ATPases have 2 components, CF(1) - the catalytic core - and CF(0) - the membrane proton channel. CF(1) has five subunits: alpha(3), beta(3), gamma(1), delta(1), epsilon(1). CF(0) has three main subunits: a(1), b(2) and c(9-12). The alpha and beta chains form an alternating ring which encloses part of the gamma chain. CF(1) is attached to CF(0) by a central stalk formed by the gamma and epsilon chains, while a peripheral stalk is formed by the delta and b chains.

Its subcellular location is the cell inner membrane. In terms of biological role, key component of the proton channel; it plays a direct role in the translocation of protons across the membrane. The sequence is that of ATP synthase subunit a 2 from Vibrio campbellii (strain ATCC BAA-1116).